A 287-amino-acid chain; its full sequence is Putative esterase/lipase HI_0193 (287 aa).

The AB hydrolase-1 domain occupies 47 to 273 (PVLIFIHGLF…SGHWVHAEKP (227 aa)). Catalysis depends on residues serine 119 and histidine 266.

It belongs to the DmpD/TodF/XylF esterase family.

The chain is Putative esterase/lipase HI_0193 from Haemophilus influenzae (strain ATCC 51907 / DSM 11121 / KW20 / Rd).